Consider the following 443-residue polypeptide: D-aminoacyl-tRNA deacylase (443 aa).

The protein belongs to the DtdA deacylase family. As to quaternary structure, monomer. Zn(2+) serves as cofactor.

It catalyses the reaction a D-aminoacyl-tRNA + H2O = a tRNA + a D-alpha-amino acid + H(+). The catalysed reaction is glycyl-tRNA(Ala) + H2O = tRNA(Ala) + glycine + H(+). Its function is as follows. D-aminoacyl-tRNA deacylase with broad substrate specificity. By recycling D-aminoacyl-tRNA to D-amino acids and free tRNA molecules, this enzyme counteracts the toxicity associated with the formation of D-aminoacyl-tRNA entities in vivo. This chain is D-aminoacyl-tRNA deacylase, found in Methanocorpusculum labreanum (strain ATCC 43576 / DSM 4855 / Z).